The sequence spans 164 residues: Protein-export protein SecB (164 aa).

Residues 1–12 (MPDKDEITHDAQ) are compositionally biased toward basic and acidic residues. A disordered region spans residues 1 to 22 (MPDKDEITHDAQSENEESLPLA).

This sequence belongs to the SecB family. In terms of assembly, homotetramer, a dimer of dimers. One homotetramer interacts with 1 SecA dimer.

Its subcellular location is the cytoplasm. In terms of biological role, one of the proteins required for the normal export of preproteins out of the cell cytoplasm. It is a molecular chaperone that binds to a subset of precursor proteins, maintaining them in a translocation-competent state. It also specifically binds to its receptor SecA. The protein is Protein-export protein SecB of Neorickettsia sennetsu (strain ATCC VR-367 / Miyayama) (Ehrlichia sennetsu).